A 297-amino-acid polypeptide reads, in one-letter code: Ribosomal protein L11 methyltransferase (297 aa).

S-adenosyl-L-methionine contacts are provided by Thr150, Gly171, Asp193, and Asn233.

The protein belongs to the methyltransferase superfamily. PrmA family.

The protein localises to the cytoplasm. The enzyme catalyses L-lysyl-[protein] + 3 S-adenosyl-L-methionine = N(6),N(6),N(6)-trimethyl-L-lysyl-[protein] + 3 S-adenosyl-L-homocysteine + 3 H(+). Its function is as follows. Methylates ribosomal protein L11. The sequence is that of Ribosomal protein L11 methyltransferase from Laribacter hongkongensis (strain HLHK9).